The primary structure comprises 293 residues: 33 kDa chaperonin (293 aa).

2 disulfides stabilise this stretch: Cys-239–Cys-241 and Cys-272–Cys-275.

Belongs to the HSP33 family. Under oxidizing conditions two disulfide bonds are formed involving the reactive cysteines. Under reducing conditions zinc is bound to the reactive cysteines and the protein is inactive.

Its subcellular location is the cytoplasm. Its function is as follows. Redox regulated molecular chaperone. Protects both thermally unfolding and oxidatively damaged proteins from irreversible aggregation. Plays an important role in the bacterial defense system toward oxidative stress. The sequence is that of 33 kDa chaperonin from Limosilactobacillus fermentum (strain NBRC 3956 / LMG 18251) (Lactobacillus fermentum).